The sequence spans 392 residues: Flagellar P-ring protein (392 aa).

The first 38 residues, methionine 1–glycine 38, serve as a signal peptide directing secretion.

This sequence belongs to the FlgI family. In terms of assembly, the basal body constitutes a major portion of the flagellar organelle and consists of four rings (L,P,S, and M) mounted on a central rod.

It localises to the periplasm. The protein localises to the bacterial flagellum basal body. Assembles around the rod to form the L-ring and probably protects the motor/basal body from shearing forces during rotation. This is Flagellar P-ring protein from Paramagnetospirillum magneticum (strain ATCC 700264 / AMB-1) (Magnetospirillum magneticum).